A 111-amino-acid chain; its full sequence is Nucleoid-associated protein PFL_1905 (111 aa).

Disordered regions lie at residues Met-1 to Ala-20 and Ser-88 to Phe-111.

This sequence belongs to the YbaB/EbfC family. Homodimer.

It is found in the cytoplasm. The protein localises to the nucleoid. Its function is as follows. Binds to DNA and alters its conformation. May be involved in regulation of gene expression, nucleoid organization and DNA protection. This Pseudomonas fluorescens (strain ATCC BAA-477 / NRRL B-23932 / Pf-5) protein is Nucleoid-associated protein PFL_1905.